The chain runs to 246 residues: Cell division protein ZapD (246 aa).

Belongs to the ZapD family. In terms of assembly, interacts with FtsZ.

It is found in the cytoplasm. Cell division factor that enhances FtsZ-ring assembly. Directly interacts with FtsZ and promotes bundling of FtsZ protofilaments, with a reduction in FtsZ GTPase activity. This Vibrio atlanticus (strain LGP32) (Vibrio splendidus (strain Mel32)) protein is Cell division protein ZapD.